Consider the following 441-residue polypeptide: Xylose isomerase (441 aa).

Active-site residues include H100 and D103. Mg(2+) is bound by residues E231, E267, H270, D295, D306, D308, and D338.

This sequence belongs to the xylose isomerase family. Homotetramer. The cofactor is Mg(2+).

It is found in the cytoplasm. It catalyses the reaction alpha-D-xylose = alpha-D-xylulofuranose. This chain is Xylose isomerase, found in Paraburkholderia phymatum (strain DSM 17167 / CIP 108236 / LMG 21445 / STM815) (Burkholderia phymatum).